The primary structure comprises 356 residues: 3-dehydroquinate synthase (356 aa).

Residues 106–110, 130–131, lysine 143, and lysine 152 contribute to the NAD(+) site; these read GVVGD and TT. The Zn(2+) site is built by glutamate 185, histidine 248, and histidine 265.

This sequence belongs to the sugar phosphate cyclases superfamily. Dehydroquinate synthase family. The cofactor is Co(2+). Requires Zn(2+) as cofactor. NAD(+) is required as a cofactor.

Its subcellular location is the cytoplasm. The catalysed reaction is 7-phospho-2-dehydro-3-deoxy-D-arabino-heptonate = 3-dehydroquinate + phosphate. The protein operates within metabolic intermediate biosynthesis; chorismate biosynthesis; chorismate from D-erythrose 4-phosphate and phosphoenolpyruvate: step 2/7. Functionally, catalyzes the conversion of 3-deoxy-D-arabino-heptulosonate 7-phosphate (DAHP) to dehydroquinate (DHQ). This chain is 3-dehydroquinate synthase, found in Thermoanaerobacter sp. (strain X514).